Reading from the N-terminus, the 85-residue chain is Large ribosomal subunit protein bL27 (85 aa).

Residues 1–10 are compositionally biased toward gly residues; that stretch reads MAQKKGGGST. The tract at residues 1–20 is disordered; it reads MAQKKGGGSTRNGRDSKPKM.

This sequence belongs to the bacterial ribosomal protein bL27 family.

The chain is Large ribosomal subunit protein bL27 from Acidovorax ebreus (strain TPSY) (Diaphorobacter sp. (strain TPSY)).